The chain runs to 238 residues: 6-phosphogluconolactonase (238 aa).

This sequence belongs to the glucosamine/galactosamine-6-phosphate isomerase family. 6-phosphogluconolactonase subfamily.

It catalyses the reaction 6-phospho-D-glucono-1,5-lactone + H2O = 6-phospho-D-gluconate + H(+). It functions in the pathway carbohydrate degradation; pentose phosphate pathway; D-ribulose 5-phosphate from D-glucose 6-phosphate (oxidative stage): step 2/3. Its function is as follows. Hydrolysis of 6-phosphogluconolactone to 6-phosphogluconate. The protein is 6-phosphogluconolactonase (pgl) of Pseudomonas aeruginosa (strain ATCC 15692 / DSM 22644 / CIP 104116 / JCM 14847 / LMG 12228 / 1C / PRS 101 / PAO1).